We begin with the raw amino-acid sequence, 529 residues long: MNNARPIRRALLSVSDKTGILEFAQALHAQGVELLSTGGTAKLLADNGVPVIEVSDYTGHPEIMDGRVKTLHPKVHGGILARRGQDEDVMAANNIGPIDLVAVNLYPFAATVAKPGCTLEDAIENIDIGGPTMVRAAAKNHKDVVIVVNAKDYDRVLAEMSANGGSTSHATRFDLAIAAFEHTAAYDGMIANYFGTMVPAHSSDECHDDSKFPRTFNTQLVKKQDLRYGENSHQSAAFYVDLNSDEASVATATQLQGKALSYNNIADTDAALECVKEFDAPACVIVKHANPCGVALGDNLLDAYNRAYKTDPTSAFGGIIAFNRELDGETAAAIVERQFVEVIIAPVVSQAARDVVAKKTNVRLLECGQWTAQTKGLDYKRVNGGLLIQDRDQGMVTEAELKVVTKRVPTEAELKDLMFCWKVAKFVKSNAIVYAKEGMTIGVGAGQMSRVYSAKIAGIKAADEGLVVEGSVMASDAFFPFRDGIDAAAAAGISCIIQPGGSIRDEEVIAAADEHGMAMVFTNMRHFRH.

Residues 1–148 (MNNARPIRRA…KNHKDVVIVV (148 aa)) form the MGS-like domain.

This sequence belongs to the PurH family.

It carries out the reaction (6R)-10-formyltetrahydrofolate + 5-amino-1-(5-phospho-beta-D-ribosyl)imidazole-4-carboxamide = 5-formamido-1-(5-phospho-D-ribosyl)imidazole-4-carboxamide + (6S)-5,6,7,8-tetrahydrofolate. The enzyme catalyses IMP + H2O = 5-formamido-1-(5-phospho-D-ribosyl)imidazole-4-carboxamide. The protein operates within purine metabolism; IMP biosynthesis via de novo pathway; 5-formamido-1-(5-phospho-D-ribosyl)imidazole-4-carboxamide from 5-amino-1-(5-phospho-D-ribosyl)imidazole-4-carboxamide (10-formyl THF route): step 1/1. It participates in purine metabolism; IMP biosynthesis via de novo pathway; IMP from 5-formamido-1-(5-phospho-D-ribosyl)imidazole-4-carboxamide: step 1/1. This Shewanella amazonensis (strain ATCC BAA-1098 / SB2B) protein is Bifunctional purine biosynthesis protein PurH.